The sequence spans 103 residues: Small ribosomal subunit protein uS10 (103 aa).

This sequence belongs to the universal ribosomal protein uS10 family. Part of the 30S ribosomal subunit.

Functionally, involved in the binding of tRNA to the ribosomes. The protein is Small ribosomal subunit protein uS10 of Burkholderia mallei (strain NCTC 10247).